Here is a 366-residue protein sequence, read N- to C-terminus: Transaldolase (366 aa).

Residue Lys-140 is the Schiff-base intermediate with substrate of the active site.

It belongs to the transaldolase family. Type 2 subfamily.

Its subcellular location is the cytoplasm. The enzyme catalyses D-sedoheptulose 7-phosphate + D-glyceraldehyde 3-phosphate = D-erythrose 4-phosphate + beta-D-fructose 6-phosphate. The protein operates within carbohydrate degradation; pentose phosphate pathway; D-glyceraldehyde 3-phosphate and beta-D-fructose 6-phosphate from D-ribose 5-phosphate and D-xylulose 5-phosphate (non-oxidative stage): step 2/3. Its function is as follows. Transaldolase is important for the balance of metabolites in the pentose-phosphate pathway. This chain is Transaldolase, found in Saccharopolyspora erythraea (strain ATCC 11635 / DSM 40517 / JCM 4748 / NBRC 13426 / NCIMB 8594 / NRRL 2338).